The sequence spans 532 residues: Omega-hydroxyceramide transacylase (532 aa).

One can recognise a PNPLA domain in the interval 16 to 185 (ISFSGSGFLS…TGMQPCAFWT (170 aa)). The GXSXG signature appears at 51–55 (GTSAG). Serine 53 serves as the catalytic Nucleophile. Aspartate 172 serves as the catalytic Proton acceptor. The short motif at 172-174 (DGG) is the DGA/G element. Disordered regions lie at residues 290 to 457 (PERS…ELGQ) and 489 to 532 (VTES…SKVQ). Positions 310-322 (PHKEWVPKGDGRG) are enriched in basic and acidic residues. 2 stretches are compositionally biased toward low complexity: residues 380 to 389 (PPSSTPGSSL) and 397 to 411 (SPLSPQQQVQPSGSP). Positions 517–532 (GFPRHSGSKKPSSKVQ) are enriched in basic residues.

Expressed in the digestive system. Expressed in the epidermis of skin keratinocytes. Strongly expressed in the granular layer. Expressed in the upper epidermis and eccrine sweat glands of the dermis and in the region of keratin filament bundles, which is more pronounced in upper epidermal layers and in the lower cornified layers.

Its subcellular location is the cytoplasm. It catalyses the reaction an N-(omega-hydroxy-ultra-long chain fatty acyl)-sphingoid base + a (9Z,12Z)-octadecadienoyl-containing triacyl-sn-glycerol = an N-[omega-(9Z,12Z-octadecadienoyloxy)-O-ultra-long chain fatty acyl]-sphingoid base + a diacylglycerol. The enzyme catalyses an N-(omega-hydroxy-ultra-long chain fatty acyl)-sphing-4-enine + a (9Z,12Z)-octadecadienoyl-containing triacyl-sn-glycerol = an N-(omega-(9Z,12Z-octadecadienoyloxy)-ultra-long chain fatty acyl)-sphing-4-enine + a diacylglycerol. The catalysed reaction is N-(30-hydroxytriacontanoyl)-sphing-4-enine + 1,2,3-tri-(9Z,12Z)-octadecadienoylglycerol = N-[30-(9Z,12Z-octadecadienoyloxy)-triacontanoyl]-sphing-4-enine + di-(9Z,12Z)-octadecadienoylglycerol. It carries out the reaction N-(28-hydroxyoctacosanoyl)-sphing-4-enine + a (9Z,12Z)-octadecadienoyl-containing triacyl-sn-glycerol = N-(28-(9Z,12Z-octadecadienoyloxy)-octacosanoyl)-sphing-4-enine + a diacylglycerol. It catalyses the reaction N-(32-hydroxydotriacontanoyl)-sphing-4-enine + a (9Z,12Z)-octadecadienoyl-containing triacyl-sn-glycerol = N-(32-(9Z,12Z-octadecadienoyloxy)-dotricontanoyl)-sphing-4-enine + a diacylglycerol. The enzyme catalyses N-(32-hydroxydotriacontenoyl)-sphing-4-enine + a (9Z,12Z)-octadecadienoyl-containing triacyl-sn-glycerol = an N-(32-(9Z,12Z-octadecadienoyloxy)-dotriacontenoyl)-sphing-4-enine + a diacylglycerol. The catalysed reaction is an N-(34-hydroxytetratriacontenoyl)-sphing-4-enine + a (9Z,12Z)-octadecadienoyl-containing triacyl-sn-glycerol = an N-(34-(9Z,12Z-octadecadienoyloxy)-tetratriacontenoyl)-sphing-4-enine + a diacylglycerol. It carries out the reaction an N-(34-hydroxytetratriacontadienoyl)-sphing-4-enine + a (9Z,12Z)-octadecadienoyl-containing triacyl-sn-glycerol = an N-(34-(9Z,12Z-octadecadienoyloxy)-tetratriacontadienoyl)-sphing-4-enine + a diacylglycerol. It catalyses the reaction an N-(36-hydroxyhexatriacontenoyl)-sphing-4-enine + a (9Z,12Z)-octadecadienoyl-containing triacyl-sn-glycerol = an N-(36-(9Z,12Z-octadecadienoyloxy)-hexatriacontenoyl)-sphing-4-enine + a diacylglycerol. The enzyme catalyses an N-(36-hydroxyhexatriacontadienoyl)-sphing-4-enine + a (9Z,12Z)-octadecadienoyl-containing triacyl-sn-glycerol = an N-(36-(9Z,12Z-octadecadienoyloxy)-hexatriacontadienoyl)-sphing-4-enine + a diacylglycerol. The catalysed reaction is an N-(38-hydroxyoctatriacontenoyl)-sphing-4-enine + a (9Z,12Z)-octadecadienoyl-containing triacyl-sn-glycerol = an N-(38-(9Z,12Z-octadecadienoyloxy)-octatriacontenoyl)-sphing-4-enine + a diacylglycerol. In terms of biological role, omega-hydroxyceramide transacylase involved in the synthesis of omega-O-acylceramides (esterified omega-hydroxyacyl-sphingosine; EOS), which are extremely hydrophobic lipids involved in skin barrier formation. Catalyzes the last step of the synthesis of omega-O-acylceramides by transferring linoleic acid from triglycerides to an omega-hydroxyceramide. Omega-O-acylceramides, are required for the biogenesis of lipid lamellae in the stratum corneum and the formation of the cornified lipid envelope which are essential for the epidermis barrier function. These lipids also play a role in keratinocyte differentiation. May also act on omega-hydroxylated ultra-long chain fatty acids (omega-OH ULCFA) and acylglucosylceramides (GlcEOS). The polypeptide is Omega-hydroxyceramide transacylase (Homo sapiens (Human)).